Reading from the N-terminus, the 956-residue chain is MPVSVITTVLACLWLSYRLYKFLTIPVSSIVSTLKIKTPPATKVSIDKIATDSVTIHWENEPVKAEDNGSADRNFISHYLLYLNNTQLAIFPNNPNSLYTCCSITGLEAETQYQLDFITINNKGFINKLPSIYCMTKAREANEALKTRKWRRNTITSSTAMQPRNSKSEPAPLPSHYSSVSLSTFSSNITNSATSNNGSNLPAYTSLTTLKDLDSFSIDDLKKILICAQEDLHDVLSQQTSLLQDFQESKLELELELDNLKTHWSHEIDLRKSLKSNIKSLENSKLLTDLKIEKLNKKIDKSKEKISKMRNDMQKWSQEDTELLSKDTIKEKYFKLLNESNASVANINKEIESLQNEISKMEESNKRLNASKKSLITSIVVNANVENDKPIASGELSAVLKKLNDFTLEKNGFLSNAGEEFLSKLNADSSLIKMIKQELSIDQELEANWKLQRSNLLKKISALENQFNEMSLNNRNLKTKLMVQPYKNNGDSLAATNSNNSAEKNRSSGSIQLPLSNNMSRTGSIDLISNNNKSINNSNADSAPPLRLHNPVSYSPSNEPIQPSSSLLSQLTQDTDNRSMLSNHISSNNENKQQPSSYSHALPTTATANATATATATNGHSRSNLWTTAQFAQPSHQQVSTELDQAFEYDNANHLISGLQNMIYDETDYPDNISNYSKGFTTDELDNYWTKQQPQVRSTNESLFSTTGTPMSSYKANPVISPYSSSHLRQTSNATNTNPMHPQSLLAATLNDPSLQSFVRSGSFYSAPQPANSLQNNINGNETENISPRISSDFNLLVPNLSPRLSNDVPIVPGNNTTLTPSHSNILTMNHQPTADNITRRSFHASSPPFNSIWNSNTNQLSPPLEEQYHLDVPVGPKVPAKEPSPKPSHKRNQSNSSISSAWSKFKHKSASSPANADTDIQDSSTPSTSPSGRRMSKLLSKSGMNNLFNPHSHDS.

The 102-residue stretch at 40-141 (PATKVSIDKI…IYCMTKAREA (102 aa)) folds into the Fibronectin type-III domain. Disordered stretches follow at residues 152–173 (RNTI…PAPL) and 488–600 (NNGD…SYSH). Polar residues-rich tracts occupy residues 153-165 (NTIT…QPRN) and 488-523 (NNGD…SRTG). The residue at position 154 (Thr-154) is a Phosphothreonine. Residues Ser-501 and Ser-520 each carry the phosphoserine modification. A compositionally biased stretch (low complexity) spans 524–543 (SIDLISNNNKSINNSNADSA). The segment covering 552–563 (VSYSPSNEPIQP) has biased composition (polar residues). Over residues 564 to 574 (SSSLLSQLTQD) the composition is skewed to low complexity. Residues 578–599 (RSMLSNHISSNNENKQQPSSYS) show a composition bias toward polar residues. Phosphoserine is present on residues Ser-802, Ser-842, and Ser-895. The interval 875–956 (VGPKVPAKEP…NLFNPHSHDS (82 aa)) is disordered. Positions 895 to 904 (SNSSISSAWS) are enriched in low complexity.

This is an uncharacterized protein from Saccharomyces cerevisiae (strain ATCC 204508 / S288c) (Baker's yeast).